The sequence spans 145 residues: Pleckstrin homology domain-containing protein 1 (145 aa).

A PH domain is found at 26–127 (NPERSGWLTK…WINSIGRSIV (102 aa)). The binds specifically PtdIns3P stretch occupies residues 29-53 (RSGWLTKQGDYIKTWRRRWFVLKRG).

Binds PtdIns3P. Ubiquitously expressed.

Its subcellular location is the cytoplasm. Its function is as follows. Binds specifically to phosphatidylinositol 3-phosphate (PtdIns3P), but not to other phosphoinositides. In Arabidopsis thaliana (Mouse-ear cress), this protein is Pleckstrin homology domain-containing protein 1 (PH1).